An 822-amino-acid polypeptide reads, in one-letter code: uncharacterized protein (822 aa).

At 1–13 (MCHNSVRSGNKAG) the chain is on the cytoplasmic side. A helical membrane pass occupies residues 14-34 (FLGIKFGSALLSIATGAIAIA). Residues 35–44 (LLCKFHDHEA) lie on the Extracellular side of the membrane. A helical membrane pass occupies residues 45–65 (VLIVIVCSTLLYGIPSLISFI). The Cytoplasmic portion of the chain corresponds to 66–76 (TETVFAPSKFH). Residues 77–97 (IGYFYNVLNFALPLITMGCTV) traverse the membrane as a helical segment. The Extracellular segment spans residues 98–120 (DYFHNTLRSPISVQSESHRVYIT). A helical transmembrane segment spans residues 121-141 (TLDSLLIFTLFINGIQLGFFL). The Cytoplasmic segment spans residues 142-822 (KDGNANNFGS…PVEELVSPSK (681 aa)). A disordered region spans residues 271 to 290 (RNTQQATKVPTEKKSNHRSS). At Ser690 the chain carries Phosphoserine. Residues 698 to 712 (TLQSSHSPTKSTSGN) show a composition bias toward polar residues. 2 disordered regions span residues 698–728 (TLQS…STVN) and 751–783 (NGEE…GYPE). The span at 761 to 776 (QSIQSSSSGSEQESAG) shows a compositional bias: low complexity.

The protein resides in the membrane. This is an uncharacterized protein from Saccharomyces cerevisiae (strain ATCC 204508 / S288c) (Baker's yeast).